The following is a 239-amino-acid chain: Aspartate/glutamate leucyltransferase (239 aa).

The protein belongs to the R-transferase family. Bpt subfamily.

It localises to the cytoplasm. The enzyme catalyses N-terminal L-glutamyl-[protein] + L-leucyl-tRNA(Leu) = N-terminal L-leucyl-L-glutamyl-[protein] + tRNA(Leu) + H(+). It catalyses the reaction N-terminal L-aspartyl-[protein] + L-leucyl-tRNA(Leu) = N-terminal L-leucyl-L-aspartyl-[protein] + tRNA(Leu) + H(+). Its function is as follows. Functions in the N-end rule pathway of protein degradation where it conjugates Leu from its aminoacyl-tRNA to the N-termini of proteins containing an N-terminal aspartate or glutamate. The polypeptide is Aspartate/glutamate leucyltransferase (Campylobacter jejuni subsp. jejuni serotype O:6 (strain 81116 / NCTC 11828)).